The chain runs to 148 residues: Probable histone H2B.1 (148 aa).

The segment covering M1–P32 has biased composition (basic and acidic residues). Positions M1–S57 are disordered. N6-acetyllysine is present on residues K7, K36, and K37. K144 is covalently cross-linked (Glycyl lysine isopeptide (Lys-Gly) (interchain with G-Cter in ubiquitin)).

It belongs to the histone H2B family. As to quaternary structure, the nucleosome is a histone octamer containing two molecules each of H2A, H2B, H3 and H4 assembled in one H3-H4 heterotetramer and two H2A-H2B heterodimers. The octamer wraps approximately 147 bp of DNA. In terms of processing, can be acetylated to form H2BK6ac, H2BK33ac and H2BK34ac. Post-translationally, monoubiquitinated to form H2BK143ub1; may give a specific tag for epigenetic transcriptional activation.

Its subcellular location is the nucleus. The protein localises to the chromosome. Core component of nucleosome. Nucleosomes wrap and compact DNA into chromatin, limiting DNA accessibility to the cellular machineries which require DNA as a template. Histones thereby play a central role in transcription regulation, DNA repair, DNA replication and chromosomal stability. DNA accessibility is regulated via a complex set of post-translational modifications of histones, also called histone code, and nucleosome remodeling. This is Probable histone H2B.1 from Medicago truncatula (Barrel medic).